Reading from the N-terminus, the 356-residue chain is UDP-N-acetylglucosamine--N-acetylmuramyl-(pentapeptide) pyrophosphoryl-undecaprenol N-acetylglucosamine transferase (356 aa).

UDP-N-acetyl-alpha-D-glucosamine is bound by residues 15 to 17 (TGG), N127, R163, S191, I244, 263 to 268 (ALTVSE), and Q288.

Belongs to the glycosyltransferase 28 family. MurG subfamily.

The protein localises to the cell inner membrane. It catalyses the reaction di-trans,octa-cis-undecaprenyl diphospho-N-acetyl-alpha-D-muramoyl-L-alanyl-D-glutamyl-meso-2,6-diaminopimeloyl-D-alanyl-D-alanine + UDP-N-acetyl-alpha-D-glucosamine = di-trans,octa-cis-undecaprenyl diphospho-[N-acetyl-alpha-D-glucosaminyl-(1-&gt;4)]-N-acetyl-alpha-D-muramoyl-L-alanyl-D-glutamyl-meso-2,6-diaminopimeloyl-D-alanyl-D-alanine + UDP + H(+). It functions in the pathway cell wall biogenesis; peptidoglycan biosynthesis. Functionally, cell wall formation. Catalyzes the transfer of a GlcNAc subunit on undecaprenyl-pyrophosphoryl-MurNAc-pentapeptide (lipid intermediate I) to form undecaprenyl-pyrophosphoryl-MurNAc-(pentapeptide)GlcNAc (lipid intermediate II). In Klebsiella pneumoniae (strain 342), this protein is UDP-N-acetylglucosamine--N-acetylmuramyl-(pentapeptide) pyrophosphoryl-undecaprenol N-acetylglucosamine transferase.